A 671-amino-acid polypeptide reads, in one-letter code: DNA ligase (671 aa).

Residues aspartate 32–aspartate 36, serine 81–leucine 82, and glutamate 113 each bind NAD(+). Lysine 115 acts as the N6-AMP-lysine intermediate in catalysis. NAD(+)-binding residues include arginine 136, glutamate 173, lysine 290, and lysine 314. Zn(2+)-binding residues include cysteine 408, cysteine 411, cysteine 426, and cysteine 432. Positions glutamate 593–serine 671 constitute a BRCT domain.

This sequence belongs to the NAD-dependent DNA ligase family. LigA subfamily. Mg(2+) is required as a cofactor. Mn(2+) serves as cofactor.

The catalysed reaction is NAD(+) + (deoxyribonucleotide)n-3'-hydroxyl + 5'-phospho-(deoxyribonucleotide)m = (deoxyribonucleotide)n+m + AMP + beta-nicotinamide D-nucleotide.. Functionally, DNA ligase that catalyzes the formation of phosphodiester linkages between 5'-phosphoryl and 3'-hydroxyl groups in double-stranded DNA using NAD as a coenzyme and as the energy source for the reaction. It is essential for DNA replication and repair of damaged DNA. The sequence is that of DNA ligase from Escherichia coli O127:H6 (strain E2348/69 / EPEC).